A 184-amino-acid chain; its full sequence is VAPKPIVDIDGKPVLYGVDYFVVSAIWGAGGGGLTVYGPGNKKKCPLSVVQDPFDNGEPIIFSAIKNVKDNIVFESVDLNVKFNITINCNETTAWKVDRFPGVIGWTVTLGGEKGYHGFESTHSMFKIKKAGLPFSYKFHFCPSYPRTRLIPCNNVDIFFDKYRIRRLILTNDAKEFVFIKTNR.

A disulfide bridge links Cys45 with Cys89. 2 N-linked (GlcNAc...) asparagine glycosylation sites follow: Asn84 and Asn90. Cys142 and Cys153 are joined by a disulfide.

The protein belongs to the protease inhibitor I3 (leguminous Kunitz-type inhibitor) family.

The protein resides in the secreted. The protein localises to the extracellular space. The sequence is that of Latex serine proteinase inhibitor from Carica papaya (Papaya).